A 631-amino-acid polypeptide reads, in one-letter code: Phosphomethylpyrimidine synthase (631 aa).

Substrate contacts are provided by residues Asn239, Met268, Tyr297, His333, 353-355 (SRG), 394-397 (DGLR), and Glu433. His437 provides a ligand contact to Zn(2+). Tyr460 serves as a coordination point for substrate. Position 501 (His501) interacts with Zn(2+). Positions 581, 584, and 589 each coordinate [4Fe-4S] cluster.

Belongs to the ThiC family. In terms of assembly, homodimer. [4Fe-4S] cluster serves as cofactor.

It carries out the reaction 5-amino-1-(5-phospho-beta-D-ribosyl)imidazole + S-adenosyl-L-methionine = 4-amino-2-methyl-5-(phosphooxymethyl)pyrimidine + CO + 5'-deoxyadenosine + formate + L-methionine + 3 H(+). The protein operates within cofactor biosynthesis; thiamine diphosphate biosynthesis. Its function is as follows. Catalyzes the synthesis of the hydroxymethylpyrimidine phosphate (HMP-P) moiety of thiamine from aminoimidazole ribotide (AIR) in a radical S-adenosyl-L-methionine (SAM)-dependent reaction. The polypeptide is Phosphomethylpyrimidine synthase (Escherichia coli O127:H6 (strain E2348/69 / EPEC)).